The chain runs to 130 residues: MAAIYLDSSAIVKLAVREPESDALRRYLRTRHPRVSSALARAEVMRALLDKGESARKAGRRALAHLDLLRVDKRVLDLAGGLLPFELRTLDAIHLATAQRLGVDLGRLCTYDDRMRDAAKTLGMAVIAPS.

Positions 4–118 constitute a PINc domain; that stretch reads IYLDSSAIVK…CTYDDRMRDA (115 aa). D7 and D91 together coordinate Mg(2+).

Belongs to the PINc/VapC protein family. The cofactor is Mg(2+).

Functionally, toxic component of a type II toxin-antitoxin (TA) system. An RNase. Upon expression in M.smegmatis inhibits colony formation. Its toxic effect is neutralized by coexpression with cognate antitoxin VapB46. This is Ribonuclease VapC46 from Mycobacterium tuberculosis (strain ATCC 25618 / H37Rv).